Consider the following 174-residue polypeptide: Small ribosomal subunit protein uS5c (174 aa).

The S5 DRBM domain occupies 17-80 (WEERVVQVKR…TDAKKHLVTV (64 aa)).

This sequence belongs to the universal ribosomal protein uS5 family. As to quaternary structure, part of the 30S ribosomal subunit. Contacts protein S4.

It localises to the plastid. Its subcellular location is the chloroplast. With S4 and S12 plays an important role in translational accuracy. This is Small ribosomal subunit protein uS5c (rps5) from Porphyra purpurea (Red seaweed).